Consider the following 789-residue polypeptide: uncharacterized protein (789 aa).

Disordered stretches follow at residues 107 to 326, 426 to 491, 523 to 625, 666 to 751, and 765 to 789; these read YQQD…NNNN, MLKS…NNNN, SVNF…ISNN, THTF…KGNN, and PTRF…YNQH. Over residues 113–123 the composition is skewed to acidic residues; it reads NNTDDEQEQEQ. 4 stretches are compositionally biased toward low complexity: residues 124–141, 151–194, 201–213, and 225–270; these read EQQQ…TPIK, TSQT…ITPI, SIST…LRSS, and TSST…THNS. Positions 274–290 are enriched in acidic residues; sequence IDDDDGDNNDEINDEND. 2 stretches are compositionally biased toward low complexity: residues 291-326 and 429-491; these read INSN…NNNN and SNNS…NNNN. Residues 523–549 are compositionally biased toward polar residues; the sequence is SVNFDRNQNQKSPFLNNTSMPNINFNE. 4 stretches are compositionally biased toward low complexity: residues 550–581, 602–617, 696–722, and 766–789; these read QSQQ…SINY, TSGS…NNSK, HIMN…SGSN, and TRFN…YNQH.

This is an uncharacterized protein from Dictyostelium discoideum (Social amoeba).